The following is a 260-amino-acid chain: Endonuclease NucS (260 aa).

The protein belongs to the NucS endonuclease family.

The protein localises to the cytoplasm. In terms of biological role, cleaves both 3' and 5' ssDNA extremities of branched DNA structures. The protein is Endonuclease NucS of Methanopyrus kandleri (strain AV19 / DSM 6324 / JCM 9639 / NBRC 100938).